We begin with the raw amino-acid sequence, 85 residues long: Neutrophil elastase 2A (85 aa).

Residues 1–85 (IVGGRAAEPH…VAQGVFSFVR (85 aa)) enclose the Peptidase S1 domain. Ser67 (charge relay system) is an active-site residue.

Belongs to the peptidase S1 family. Elastase subfamily.

Its function is as follows. May be involved in the degradation of connective tissue in chronic lung disease. This is Neutrophil elastase 2A from Equus caballus (Horse).